The chain runs to 374 residues: DNA-directed RNA polymerase subunit alpha (374 aa).

The alpha N-terminal domain (alpha-NTD) stretch occupies residues 1 to 270; that stretch reads MIFDEDSSSV…DQFQQFINFD (270 aa). The tract at residues 282-374 is alpha C-terminal domain (alpha-CTD); that stretch reads KDVLPYDSNL…ESLSKQYSEE (93 aa).

Belongs to the RNA polymerase alpha chain family. As to quaternary structure, homodimer. The RNAP catalytic core consists of 2 alpha, 1 beta, 1 beta' and 1 omega subunit. When a sigma factor is associated with the core the holoenzyme is formed, which can initiate transcription.

The enzyme catalyses RNA(n) + a ribonucleoside 5'-triphosphate = RNA(n+1) + diphosphate. Functionally, DNA-dependent RNA polymerase catalyzes the transcription of DNA into RNA using the four ribonucleoside triphosphates as substrates. In Ehrlichia ruminantium (strain Welgevonden), this protein is DNA-directed RNA polymerase subunit alpha.